A 396-amino-acid chain; its full sequence is MSTLKLNPYFGEYGGMYVPQILVPALKQLETAFVEAQEDEDFKAEFTDLLKNYAGRPTALTLTRNLSPNPMVKIYLKREDLLHGGAHKTNQVLGQALLAKRMGKKEIIAETGAGQHGVATALACALLGLKCKVYMGAKDVARQSPNVFRMRLMGAEVIPVTSGSATLKDACNEAMRDWSGSYEKAHYLLGTAAGPHPFPTIVREFQRIIGEETKKQMLEREGRLPDAVIACVGGGSNAIGMFADFIDEPSVELIGVEPAGKGIDTPMHGAPLKHGKTGIFFGMKAPLMQDSEGQIEESYSISAGLDFPSVGPQHAHLNATGRARYESATDDEALEAFQQLARCEGIIPALESAHAIAYAVKMARECTKETILVVNLSGRGDKDIFTVSDILNGKEV.

Lysine 88 carries the N6-(pyridoxal phosphate)lysine modification.

It belongs to the TrpB family. As to quaternary structure, tetramer of two alpha and two beta chains. It depends on pyridoxal 5'-phosphate as a cofactor.

It catalyses the reaction (1S,2R)-1-C-(indol-3-yl)glycerol 3-phosphate + L-serine = D-glyceraldehyde 3-phosphate + L-tryptophan + H2O. The protein operates within amino-acid biosynthesis; L-tryptophan biosynthesis; L-tryptophan from chorismate: step 5/5. The beta subunit is responsible for the synthesis of L-tryptophan from indole and L-serine. The chain is Tryptophan synthase beta chain from Shewanella putrefaciens (strain CN-32 / ATCC BAA-453).